Consider the following 393-residue polypeptide: Arginine biosynthesis bifunctional protein ArgJ (393 aa).

The substrate site is built by Thr142, Lys168, Thr179, Glu265, Asn388, and Thr393. The active-site Nucleophile is the Thr179.

It belongs to the ArgJ family. In terms of assembly, heterotetramer of two alpha and two beta chains.

The protein localises to the cytoplasm. The enzyme catalyses N(2)-acetyl-L-ornithine + L-glutamate = N-acetyl-L-glutamate + L-ornithine. The catalysed reaction is L-glutamate + acetyl-CoA = N-acetyl-L-glutamate + CoA + H(+). Its pathway is amino-acid biosynthesis; L-arginine biosynthesis; L-ornithine and N-acetyl-L-glutamate from L-glutamate and N(2)-acetyl-L-ornithine (cyclic): step 1/1. It participates in amino-acid biosynthesis; L-arginine biosynthesis; N(2)-acetyl-L-ornithine from L-glutamate: step 1/4. In terms of biological role, catalyzes two activities which are involved in the cyclic version of arginine biosynthesis: the synthesis of N-acetylglutamate from glutamate and acetyl-CoA as the acetyl donor, and of ornithine by transacetylation between N(2)-acetylornithine and glutamate. In Geobacter sulfurreducens (strain ATCC 51573 / DSM 12127 / PCA), this protein is Arginine biosynthesis bifunctional protein ArgJ.